The sequence spans 180 residues: Adenine phosphoribosyltransferase (180 aa).

Ala2 bears the N-acetylalanine mark. Residues Ser15 and Ser30 each carry the phosphoserine modification. The residue at position 60 (Tyr60) is a Phosphotyrosine. Ser66 is modified (phosphoserine). Lys114 is modified (N6-acetyllysine). Thr135 carries the phosphothreonine modification.

Belongs to the purine/pyrimidine phosphoribosyltransferase family. Homodimer.

Its subcellular location is the cytoplasm. It catalyses the reaction AMP + diphosphate = 5-phospho-alpha-D-ribose 1-diphosphate + adenine. The protein operates within purine metabolism; AMP biosynthesis via salvage pathway; AMP from adenine: step 1/1. Its function is as follows. Catalyzes a salvage reaction resulting in the formation of AMP, that is energically less costly than de novo synthesis. This is Adenine phosphoribosyltransferase from Dipodillus campestris (North African gerbil).